The chain runs to 466 residues: Glutamate--tRNA ligase (466 aa).

The 'HIGH' region signature appears at 9–19; the sequence is PSPTGDLHVGS. Positions 237 to 241 match the 'KMSKS' region motif; it reads KLSKR. Lys240 lines the ATP pocket.

The protein belongs to the class-I aminoacyl-tRNA synthetase family. Glutamate--tRNA ligase type 1 subfamily. In terms of assembly, monomer.

It localises to the cytoplasm. It catalyses the reaction tRNA(Glu) + L-glutamate + ATP = L-glutamyl-tRNA(Glu) + AMP + diphosphate. Catalyzes the attachment of glutamate to tRNA(Glu) in a two-step reaction: glutamate is first activated by ATP to form Glu-AMP and then transferred to the acceptor end of tRNA(Glu). The protein is Glutamate--tRNA ligase of Baumannia cicadellinicola subsp. Homalodisca coagulata.